A 234-amino-acid polypeptide reads, in one-letter code: tRNA1(Val) (adenine(37)-N6)-methyltransferase (234 aa).

It belongs to the methyltransferase superfamily. tRNA (adenine-N(6)-)-methyltransferase family.

The protein resides in the cytoplasm. It catalyses the reaction adenosine(37) in tRNA1(Val) + S-adenosyl-L-methionine = N(6)-methyladenosine(37) in tRNA1(Val) + S-adenosyl-L-homocysteine + H(+). Specifically methylates the adenine in position 37 of tRNA(1)(Val) (anticodon cmo5UAC). The protein is tRNA1(Val) (adenine(37)-N6)-methyltransferase of Pedobacter heparinus (strain ATCC 13125 / DSM 2366 / CIP 104194 / JCM 7457 / NBRC 12017 / NCIMB 9290 / NRRL B-14731 / HIM 762-3).